A 189-amino-acid polypeptide reads, in one-letter code: uncharacterized protein (189 aa).

A run of 4 helical transmembrane segments spans residues 35 to 55 (IIWY…AVMK), 97 to 117 (GVLQ…ALHF), 123 to 143 (WLLF…YEWT), and 144 to 164 (GNLF…ACQI).

Its subcellular location is the cell membrane. This is an uncharacterized protein from Bacillus subtilis (strain 168).